We begin with the raw amino-acid sequence, 623 residues long: Dynein axonemal intermediate chain 2 (623 aa).

WD repeat units lie at residues 214–254 (KPLS…LVAE), 261–302 (SHRD…EPIE), 362–401 (GHHGPIYALQRNPFYPKNFLTVGDWTARIWSEDSRESSIM), 405–445 (YHMA…CDPA), and 450–489 (VCDDPLFCLRVQDNGCLIACGSELGTTTLLEVSSSLSTLQ). The tract at residues 565-602 (AEALKKKPKPRKKSSVKVEAEEEVEENVGEEEEAGGII) is disordered. Positions 570-579 (KKPKPRKKSS) are enriched in basic residues. The segment covering 584–598 (AEEEVEENVGEEEEA) has biased composition (acidic residues).

It belongs to the dynein intermediate chain family. Consists of at least two heavy chains and a number of intermediate and light chains. Interacts with DNAAF2. Interacts with DNAAF6/PIH1D3. Interacts with HEATR2; probably involved in outer arm dynein assembly. Interacts with CFAP53. As to expression, predominantly expressed in ovary, testis and lung.

Its subcellular location is the cytoplasm. The protein resides in the cytoskeleton. It is found in the cilium axoneme. The protein localises to the dynein axonemal particle. Its function is as follows. Part of the dynein complex of respiratory cilia. The sequence is that of Dynein axonemal intermediate chain 2 (Dnai2) from Mus musculus (Mouse).